Reading from the N-terminus, the 252-residue chain is Glucosamine-6-phosphate deaminase (252 aa).

Aspartate 67 acts as the Proton acceptor; for enolization step in catalysis. The active-site For ring-opening step is the asparagine 137. Histidine 139 acts as the Proton acceptor; for ring-opening step in catalysis. The For ring-opening step role is filled by glutamate 144.

The protein belongs to the glucosamine/galactosamine-6-phosphate isomerase family. NagB subfamily.

The catalysed reaction is alpha-D-glucosamine 6-phosphate + H2O = beta-D-fructose 6-phosphate + NH4(+). It functions in the pathway amino-sugar metabolism; N-acetylneuraminate degradation; D-fructose 6-phosphate from N-acetylneuraminate: step 5/5. Its function is as follows. Catalyzes the reversible isomerization-deamination of glucosamine 6-phosphate (GlcN6P) to form fructose 6-phosphate (Fru6P) and ammonium ion. The polypeptide is Glucosamine-6-phosphate deaminase (Staphylococcus aureus (strain bovine RF122 / ET3-1)).